Here is a 154-residue protein sequence, read N- to C-terminus: Phospholipase A2 OS1 (154 aa).

The first 27 residues, 1 to 27 (MHPAHLLVLLAVCVSLLGAARIPPLPL), serve as a signal peptide directing secretion. Intrachain disulfides connect cysteine 38-cysteine 104, cysteine 54-cysteine 153, cysteine 56-cysteine 72, cysteine 71-cysteine 132, cysteine 78-cysteine 125, cysteine 88-cysteine 118, and cysteine 111-cysteine 123. The Ca(2+) site is built by glycine 57 and glycine 59. Residue histidine 75 is part of the active site. Aspartate 76 is a Ca(2+) binding site. Aspartate 126 is an active-site residue.

It belongs to the phospholipase A2 family. Group I subfamily. D49 sub-subfamily. As to quaternary structure, monomer. Ca(2+) is required as a cofactor. In terms of tissue distribution, expressed by the venom gland.

Its subcellular location is the secreted. The enzyme catalyses a 1,2-diacyl-sn-glycero-3-phosphocholine + H2O = a 1-acyl-sn-glycero-3-phosphocholine + a fatty acid + H(+). Functionally, snake venom phospholipase A2 (PLA2) that has a low specific activity on phospholipid substrates, and is neither neurotoxic, nor myotoxic. Induces endothelial cell migration which is mediated, at least in part, by its hydrolytic products. Shows antimalarial activity, but is not able to potently inhibit HIV-1 replication. Binds in a calcium-independent fashion with very high affinity to a muscle-type (M-type) PLA2 receptor, but is a very poor ligand for neuronal-type (N-type) receptors. PLA2 catalyzes the calcium-dependent hydrolysis of the 2-acyl groups in 3-sn-phosphoglycerides. The protein is Phospholipase A2 OS1 of Oxyuranus scutellatus scutellatus (Australian taipan).